The chain runs to 49 residues: uncharacterized protein (49 aa).

This sequence belongs to the metallo-dependent hydrolases superfamily. TatD-type hydrolase family. The cofactor is a divalent metal cation.

This is an uncharacterized protein from Geobacillus stearothermophilus (Bacillus stearothermophilus).